A 290-amino-acid chain; its full sequence is Acetyl-coenzyme A carboxylase carboxyl transferase subunit beta (290 aa).

In terms of domain architecture, CoA carboxyltransferase N-terminal spans 27–290 (LWVKCPSCES…LQKQPADAVA (264 aa)). Zn(2+) is bound by residues Cys31, Cys34, Cys50, and Cys53. The C4-type zinc-finger motif lies at 31–53 (CPSCESTLYRTDVEANLHVCPKC).

The protein belongs to the AccD/PCCB family. Acetyl-CoA carboxylase is a heterohexamer composed of biotin carboxyl carrier protein (AccB), biotin carboxylase (AccC) and two subunits each of ACCase subunit alpha (AccA) and ACCase subunit beta (AccD). Zn(2+) is required as a cofactor.

It is found in the cytoplasm. The enzyme catalyses N(6)-carboxybiotinyl-L-lysyl-[protein] + acetyl-CoA = N(6)-biotinyl-L-lysyl-[protein] + malonyl-CoA. It functions in the pathway lipid metabolism; malonyl-CoA biosynthesis; malonyl-CoA from acetyl-CoA: step 1/1. Functionally, component of the acetyl coenzyme A carboxylase (ACC) complex. Biotin carboxylase (BC) catalyzes the carboxylation of biotin on its carrier protein (BCCP) and then the CO(2) group is transferred by the transcarboxylase to acetyl-CoA to form malonyl-CoA. This chain is Acetyl-coenzyme A carboxylase carboxyl transferase subunit beta, found in Cupriavidus taiwanensis (strain DSM 17343 / BCRC 17206 / CCUG 44338 / CIP 107171 / LMG 19424 / R1) (Ralstonia taiwanensis (strain LMG 19424)).